Here is a 235-residue protein sequence, read N- to C-terminus: Transmembrane protein 215 (235 aa).

Helical transmembrane passes span 12-32 and 40-60; these read LVVA…VSGM and IPLL…IALA. Positions 99-146 are disordered; it reads SDLESGKGSSDELAKKAGLRGKQLPQGPGEVPMASSVTTPTPTEEGEC.

The protein resides in the membrane. This is Transmembrane protein 215 (Tmem215) from Mus musculus (Mouse).